Consider the following 251-residue polypeptide: Triosephosphate isomerase (251 aa).

9–11 (NWK) contacts substrate. His95 acts as the Electrophile in catalysis. Glu167 acts as the Proton acceptor in catalysis. Substrate contacts are provided by residues Gly173, Ser212, and 233-234 (GG).

The protein belongs to the triosephosphate isomerase family. In terms of assembly, homodimer.

The protein resides in the cytoplasm. It catalyses the reaction D-glyceraldehyde 3-phosphate = dihydroxyacetone phosphate. It functions in the pathway carbohydrate biosynthesis; gluconeogenesis. It participates in carbohydrate degradation; glycolysis; D-glyceraldehyde 3-phosphate from glycerone phosphate: step 1/1. In terms of biological role, involved in the gluconeogenesis. Catalyzes stereospecifically the conversion of dihydroxyacetone phosphate (DHAP) to D-glyceraldehyde-3-phosphate (G3P). The sequence is that of Triosephosphate isomerase from Pseudomonas syringae pv. tomato (strain ATCC BAA-871 / DC3000).